The chain runs to 486 residues: Iron-sulfur cluster assembly SufBD family protein ycf24 (486 aa).

The protein belongs to the iron-sulfur cluster assembly SufBD family.

It is found in the plastid. The protein resides in the chloroplast. This Trieres chinensis (Marine centric diatom) protein is Iron-sulfur cluster assembly SufBD family protein ycf24 (ycf24).